We begin with the raw amino-acid sequence, 276 residues long: UDP-3-O-acyl-N-acetylglucosamine deacetylase (276 aa).

Zn(2+) is bound by residues His76, His234, and Asp238. Residue His261 is the Proton donor of the active site.

Belongs to the LpxC family. The cofactor is Zn(2+).

The enzyme catalyses a UDP-3-O-[(3R)-3-hydroxyacyl]-N-acetyl-alpha-D-glucosamine + H2O = a UDP-3-O-[(3R)-3-hydroxyacyl]-alpha-D-glucosamine + acetate. The protein operates within glycolipid biosynthesis; lipid IV(A) biosynthesis; lipid IV(A) from (3R)-3-hydroxytetradecanoyl-[acyl-carrier-protein] and UDP-N-acetyl-alpha-D-glucosamine: step 2/6. Functionally, catalyzes the hydrolysis of UDP-3-O-myristoyl-N-acetylglucosamine to form UDP-3-O-myristoylglucosamine and acetate, the committed step in lipid A biosynthesis. This is UDP-3-O-acyl-N-acetylglucosamine deacetylase from Synechocystis sp. (strain ATCC 27184 / PCC 6803 / Kazusa).